The sequence spans 401 residues: Type 3 secretion system translocon protein SctE (401 aa).

Residues 129–160 (IQRLHEQNMKKIEENQEKIKETEENAKQVKKS) adopt a coiled-coil conformation. 2 helical membrane passes run 166 to 186 (IFGW…VASG) and 225 to 245 (LGPI…VMTF). Residues 345–379 (LALNKADMAALQSIIDRLKEELSHLSESHRQVMEL) adopt a coiled-coil conformation.

This sequence belongs to the SctE/SipB/YopB family. In terms of assembly, the core secretion machinery of the T3SS is composed of approximately 20 different proteins, including cytoplasmic components, a base, an export apparatus and a needle. This subunit is involved in the formation of a pore, called the translocon, in host membrane. Interacts with YopD/SctB. Together with YopD/SctB, forms a multimeric integral membrane complex with a mass of between 500 and 700 kDa.

The protein localises to the secreted. It is found in the host membrane. In terms of biological role, component of the type III secretion system (T3SS), also called injectisome, which is used to inject bacterial effector proteins into eukaryotic host cells. YopB/SctE and YopD/SctB are inserted into the host membrane where they form a pore and allow the translocation of effector proteins into the cytosol of target cells. Is an essential virulence determinant. Required for YopE translocation. Its function is as follows. Essential for the establishment of Yersinia infections in a mouse model system, but not for the targeting of effector Yops. May modulate the host's immune response at a distance from the site of infection. The chain is Type 3 secretion system translocon protein SctE from Yersinia enterocolitica.